The following is a 255-amino-acid chain: tRNA (guanine-N(1)-)-methyltransferase (255 aa).

S-adenosyl-L-methionine contacts are provided by residues Gly113 and 133 to 138 (IGDYVL).

The protein belongs to the RNA methyltransferase TrmD family. As to quaternary structure, homodimer.

Its subcellular location is the cytoplasm. It carries out the reaction guanosine(37) in tRNA + S-adenosyl-L-methionine = N(1)-methylguanosine(37) in tRNA + S-adenosyl-L-homocysteine + H(+). Specifically methylates guanosine-37 in various tRNAs. This is tRNA (guanine-N(1)-)-methyltransferase from Escherichia coli O81 (strain ED1a).